The sequence spans 508 residues: Protection of telomeres protein tpz1 (508 aa).

Residues 2–223 (SNCLKHPWLE…ENTTHGIYLE (222 aa)) are pot1-binding. Disordered stretches follow at residues 159–178 (QEASLSQQEKPNDNTSNSRD), 235–269 (VSETPEVKQEDNDEDLDAYSWSSSTDSAGEIPSLP), and 282–358 (PPPF…QSHR). Residues 327-347 (STEQLNSSLTIERSQSIQSTD) are compositionally biased toward polar residues. Residues 348-358 (SKQRVETQSHR) are compositionally biased toward basic and acidic residues. The segment at 379–508 (TIDDSTGKLL…KKIEEFRNKS (130 aa)) is ccq1/poz1-binding.

As to quaternary structure, interacts with ccq1, pot1 and poz1.

The protein resides in the chromosome. Its subcellular location is the telomere. It localises to the nucleus. Functionally, telomeric DNA-binding protein that is required to protect the 3'-end telomeric overhang and involved in telomere length regulation. recruits poz1 and ccq1 to telomeres, regulating telomere length negatively and positively respectively. The sequence is that of Protection of telomeres protein tpz1 (tpz1) from Schizosaccharomyces pombe (strain 972 / ATCC 24843) (Fission yeast).